The following is a 1849-amino-acid chain: MPRSPTSSEDEMAQSFSDYSVGSESDSSKEETIYDTIRATAEKPGGARTEESQGNTLVIRVVIHDLQQTKCIRFNPDATVWVAKQRILCTLTQSLKDVLNYGLFQPASNGRDGKFLDEERLLREYPQPVGEGVPSLEFRYKKRVYKQASLDEKQLAKLHTKTNLKKCMDHIQHRLVEKITKMLDRGLDPNFHDPETGETPLTLAAQLDDSVEVIKALKNGGAHLDFRAKDGMTALHKAARARNQVALKTLLELGASPDYKDSYGLTPLYHTAIVGGDPYCCELLLHEHATVCCKDENGWHEIHQACRYGHVQHLEHLLFYGADMSAQNASGNTALHICALYNQDSCARVLLFRGGNKELKNYNSQTPFQVAIIAGNFELAEYIKNHKETDIVPFREAPAYSNRRRRPPNTLAAPRVLLRSNSDNNLNASAPDWAVCSTATSHRSLSPQLLQQMPSKPEGAAKTIGSYVPGPRSRSPSLNRLGGAGEDGKRPQPLWHVGSPFALGANKDSLSAFEYPGPKRKLYSAVPGRLFVAVKPYQPQVDGEIPLHRGDRVKVLSIGEGGFWEGSARGHIGWFPAECVEEVQCKPRDSQAETRADRSKKLFRHYTVGSYDSFDTSSDCIIEEKTVVLQKKDNEGFGFVLRGAKADTPIEEFTPTPAFPALQYLESVDEGGVAWQAGLRTGDFLIEVNNENVVKVGHRQVVNMIRQGGNHLVLKVVTVTRNLDPDDTARKKAPPPPKRAPTTALTLRSKSMTSELEELVDKASVRKKKDKPEEIVPASKPSRAAENMAVEPRVATIKQRPSSRCFPAGSDMNSVYERQGIAVMTPTVPGSPKAPFLGIPRGTMRRQKSIDSRIFLSGITEEERQFLAPPMLKFTRSLSMPDTSEDIPPPPQSVPPSPPPPSPTTYNCPKSPTPRVYGTIKPAFNQNSAAKVSPATRSDTVATMMREKGMYFRRELDRYSLDSEDLYSRNAGPQANFRNKRGQMPENPYSEVGKIASKAVYVPAKPARRKGMLVKQSNVEDSPEKTCSIPIPTIIVKEPSTSSSGKSSQGSSMEIDPQAPEPPSQLRPDESLTVSSPFAAAIAGAVRDREKRLEARRNSPAFLSTDLGDEDVGLGPPAPRTRPSMFPEEGDFADEDSAEQLSSPMPSATPREPENHFVGGAEASAPGEAGRPLNSTSKAQGPESSPAVPSASSGTAGPGNYVHPLTGRLLDPSSPLALALSARDRAMKESQQGPKGEAPKADLNKPLYIDTKMRPSLDAGFPTVTRQNTRGPLRRQETENKYETDLGRDRKGDDKKNMLIDIMDTSQQKSAGLLMVHTVDATKLDNALQEEDEKAEVEMKPDSSPSEVPEGVSETEGALQISAAPEPTTVPGRTIVAVGSMEEAVILPFRIPPPPLASVDLDEDFIFTEPLPPPLEFANSFDIPDDRAASVPALSDLVKQKKSDTPQSPSLNSSQPTNSADSKKPASLSNCLPASFLPPPESFDAVADSGIEEVDSRSSSDHHLETTSTISTVSSISTLSSEGGENVDTCTVYADGQAFMVDKPPVPPKPKMKPIIHKSNALYQDALVEEDVDSFVIPPPAPPPPPGSAQPGMAKVLQPRTSKLWGDVTEIKSPILSGPKANVISELNSILQQMNREKLAKPGEGLDSPMGAKSASLAPRSPEIMSTISGTRSTTVTFTVRPGTSQPITLQSRPPDYESRTSGTRRAPSPVVSPTEMNKETLPAPLSAATASPSPALSDVFSLPSQPPSGDLFGLNPAGRSRSPSPSILQQPISNKPFTTKPVHLWTKPDVADWLESLNLGEHKEAFMDNEIDGSHLPNLQKEDLIDLGVTRVGHRMNIERALKQLLDR.

Residues 1–33 are disordered; the sequence is MPRSPTSSEDEMAQSFSDYSVGSESDSSKEETI. Low complexity predominate over residues 15-25; that stretch reads SFSDYSVGSES. 6 ANK repeats span residues 196-226, 230-259, 263-293, 297-326, 330-359, and 363-393; these read TGET…HLDF, DGMT…SPDY, YGLT…TVCC, NGWH…DMSA, SGNT…NKEL, and NSQT…DIVP. A disordered region spans residues 451–493; that stretch reads QQMPSKPEGAAKTIGSYVPGPRSRSPSLNRLGGAGEDGKRPQP. In terms of domain architecture, SH3 spans 526 to 585; it reads VPGRLFVAVKPYQPQVDGEIPLHRGDRVKVLSIGEGGFWEGSARGHIGWFPAECVEEVQC. A PDZ domain is found at 626–720; sequence TVVLQKKDNE…HLVLKVVTVT (95 aa). The segment covering 764–774 has biased composition (basic and acidic residues); sequence SVRKKKDKPEE. The tract at residues 764-808 is disordered; it reads SVRKKKDKPEEIVPASKPSRAAENMAVEPRVATIKQRPSSRCFPA. Residue serine 831 is modified to Phosphoserine. A Phosphothreonine modification is found at threonine 860. A disordered region spans residues 878–910; that stretch reads LSMPDTSEDIPPPPQSVPPSPPPPSPTTYNCPK. The span at 887-903 shows a compositional bias: pro residues; sequence IPPPPQSVPPSPPPPSP. At serine 960 the chain carries Phosphoserine. Disordered regions lie at residues 1013–1293, 1328–1371, 1432–1526, and 1574–1594; these read LVKQ…RKGD, LQEE…TTVP, PALS…GGEN, and SFVI…PGMA. Residues 1040–1052 show a composition bias toward low complexity; it reads STSSSGKSSQGSS. Residues 1086 to 1097 are compositionally biased toward basic and acidic residues; sequence VRDREKRLEARR. At serine 1099 the chain carries Phosphoserine. The span at 1128 to 1138 shows a compositional bias: acidic residues; the sequence is EEGDFADEDSA. 3 stretches are compositionally biased toward low complexity: residues 1159–1170, 1181–1199, and 1208–1221; these read GGAEASAPGEAG, GPES…AGPG, and RLLD…LALS. Residues 1274–1293 are compositionally biased toward basic and acidic residues; sequence RRQETENKYETDLGRDRKGD. Threonine 1278 carries the post-translational modification Phosphothreonine. Positions 1327 to 1333 match the SH3-binding motif; sequence ALQEEDE. A compositionally biased stretch (low complexity) spans 1343 to 1357; sequence SSPSEVPEGVSETEG. Positions 1445-1460 are enriched in polar residues; it reads TPQSPSLNSSQPTNSA. Residues 1494 to 1505 show a composition bias toward basic and acidic residues; it reads VDSRSSSDHHLE. The segment covering 1506 to 1522 has biased composition (low complexity); sequence TTSTISTVSSISTLSSE. The segment covering 1577–1588 has biased composition (pro residues); that stretch reads IPPPAPPPPPGS. A glycan (O-linked (GlcNAc) threonine) is linked at threonine 1667. Positions 1678 to 1692 are enriched in polar residues; the sequence is FTVRPGTSQPITLQS. The tract at residues 1678–1776 is disordered; the sequence is FTVRPGTSQP…SILQQPISNK (99 aa). Residues serine 1709 and serine 1713 each carry the phosphoserine modification. Composition is skewed to low complexity over residues 1721–1738 and 1760–1774; these read TLPA…PALS and RSRS…QPIS. One can recognise an SAM domain in the interval 1786 to 1849; sequence WTKPDVADWL…ERALKQLLDR (64 aa).

Belongs to the SHANK family. Is part of a complex with DLG4/PSD-95 and DLGAP1/GKAP. Interacts with CTTN/cortactin SH3 domain, DLGAP1/GKAP and alpha-latrotoxin receptor 1. Interacts with DNM2, DBNL, GRID2, BAIAP2, SLC9A3, PLCB3 and CFTR. Interacts (via proline-rich region) with PDE4D. Interacts with ABI1 (via SH3 domain). Isoform 3 is present in epithelial colonic cells (at protein level).

The protein resides in the apical cell membrane. It localises to the cytoplasm. It is found in the synapse. The protein localises to the postsynaptic density. Its subcellular location is the cell projection. The protein resides in the growth cone. It localises to the dendritic spine. Functionally, seems to be an adapter protein in the postsynaptic density (PSD) of excitatory synapses that interconnects receptors of the postsynaptic membrane including NMDA-type and metabotropic glutamate receptors, and the actin-based cytoskeleton. May play a role in the structural and functional organization of the dendritic spine and synaptic junction. This Homo sapiens (Human) protein is SH3 and multiple ankyrin repeat domains protein 2 (SHANK2).